Here is a 482-residue protein sequence, read N- to C-terminus: MSSVKRRKTEKNTSSGLKSKQAKEPKEASPLSSPEPTEENQNNEIEEGTEEEEVTKSFKDLGIVDSLCEACDTLGYKAPTPIQRESIPLALQGRDLIGLAETGSGKTAAFALPILQSLLDKPQPLFGLVLAPTRELAYQISQSFEALGSIIRVKCAVIVGGMDMVPQAIALGKKPHIIVATPGRLLDHLENTKGFSLRSLKYLVMDEADRLLDLDFGPILDKILKVLPRERRTYLFSATISSKVESLQRASLKDPLRVSISSNKYQTVSTLIQNYIFIPLVHKDTYLIYLLNEFAGQSAIIFTRTVNETQRIAILLRTLGFGAIPLHGQLSQSSRLGALNKFRAGSREILVATDVAARGLDIPSVDVVLNYDMPQDSKTYIHRVGRTARAGKSGHAISFVTQYDVEIWMRIEAALGKKQEEYQTVKDEVMVFKPRVEEAQRHARNEMKNLHEDRGKKGAVLKGRRPANGAKRGRDEMDREEG.

The segment at 1-55 is disordered; the sequence is MSSVKRRKTEKNTSSGLKSKQAKEPKEASPLSSPEPTEENQNNEIEEGTEEEEVT. A compositionally biased stretch (acidic residues) spans 44–53; the sequence is EIEEGTEEEE. The Q motif signature appears at 56–84; it reads KSFKDLGIVDSLCEACDTLGYKAPTPIQR. The Helicase ATP-binding domain maps to 87 to 258; sequence IPLALQGRDL…RASLKDPLRV (172 aa). ATP is bound at residue 100–107; that stretch reads AETGSGKT. A DEAD box motif is present at residues 206-209; sequence DEAD. One can recognise a Helicase C-terminal domain in the interval 282-430; the sequence is HKDTYLIYLL…EYQTVKDEVM (149 aa). Composition is skewed to basic and acidic residues over residues 444–456 and 472–482; these read RNEM…DRGK and RGRDEMDREEG. The segment at 444–482 is disordered; that stretch reads RNEMKNLHEDRGKKGAVLKGRRPANGAKRGRDEMDREEG.

Belongs to the DEAD box helicase family. DDX47/RRP3 subfamily. In terms of assembly, interacts with the SSU processome.

The protein resides in the nucleus. It catalyses the reaction ATP + H2O = ADP + phosphate + H(+). Its function is as follows. ATP-dependent rRNA helicase required for pre-ribosomal RNA processing. Involved in the maturation of the 35S-pre-rRNA and to its cleavage to mature 18S rRNA. The chain is ATP-dependent rRNA helicase rrp3 from Sclerotinia sclerotiorum (strain ATCC 18683 / 1980 / Ss-1) (White mold).